Reading from the N-terminus, the 393-residue chain is Anhydro-N-acetylmuramic acid kinase (393 aa).

Position 9-16 (Gly9–Asp16) interacts with ATP.

Belongs to the anhydro-N-acetylmuramic acid kinase family.

The enzyme catalyses 1,6-anhydro-N-acetyl-beta-muramate + ATP + H2O = N-acetyl-D-muramate 6-phosphate + ADP + H(+). The protein operates within amino-sugar metabolism; 1,6-anhydro-N-acetylmuramate degradation. It participates in cell wall biogenesis; peptidoglycan recycling. Catalyzes the specific phosphorylation of 1,6-anhydro-N-acetylmuramic acid (anhMurNAc) with the simultaneous cleavage of the 1,6-anhydro ring, generating MurNAc-6-P. Is required for the utilization of anhMurNAc either imported from the medium or derived from its own cell wall murein, and thus plays a role in cell wall recycling. The protein is Anhydro-N-acetylmuramic acid kinase of Acidithiobacillus ferrooxidans (strain ATCC 23270 / DSM 14882 / CIP 104768 / NCIMB 8455) (Ferrobacillus ferrooxidans (strain ATCC 23270)).